A 311-amino-acid polypeptide reads, in one-letter code: Putative S-adenosyl-L-methionine-dependent methyltransferase MMAR_0358 (311 aa).

S-adenosyl-L-methionine-binding positions include Asp132 and 161-162 (DL).

It belongs to the UPF0677 family.

Its function is as follows. Exhibits S-adenosyl-L-methionine-dependent methyltransferase activity. In Mycobacterium marinum (strain ATCC BAA-535 / M), this protein is Putative S-adenosyl-L-methionine-dependent methyltransferase MMAR_0358.